We begin with the raw amino-acid sequence, 395 residues long: Tyrosine--tRNA ligase 2 (395 aa).

A 'HIGH' region motif is present at residues Pro-42–His-51. The short motif at Lys-226 to Ser-230 is the 'KMSKS' region element. Lys-229 provides a ligand contact to ATP. The region spanning Ile-334–Ile-394 is the S4 RNA-binding domain.

This sequence belongs to the class-I aminoacyl-tRNA synthetase family. TyrS type 2 subfamily. Homodimer.

Its subcellular location is the cytoplasm. It carries out the reaction tRNA(Tyr) + L-tyrosine + ATP = L-tyrosyl-tRNA(Tyr) + AMP + diphosphate + H(+). Catalyzes the attachment of tyrosine to tRNA(Tyr) in a two-step reaction: tyrosine is first activated by ATP to form Tyr-AMP and then transferred to the acceptor end of tRNA(Tyr). The protein is Tyrosine--tRNA ligase 2 of Vibrio cholerae serotype O1 (strain ATCC 39315 / El Tor Inaba N16961).